The chain runs to 395 residues: Zinc finger protein 385D (395 aa).

The segment at 80–110 (ISCNICQLRFNSDSQAAAHYKGTKHAKKLKA) adopts a Matrin-type 1 zinc-finger fold. Polar residues predominate over residues 169-193 (MTTEITSKVEKSPTTATGNSSCPST). A disordered region spans residues 169–194 (MTTEITSKVEKSPTTATGNSSCPSTE). 2 consecutive Matrin-type zinc fingers follow at residues 204 to 234 (LYCSLCKVAVNSASQLEAHNSGTKHKTMLEA) and 267 to 297 (FHCEICDVHVNSETQLKQHISSRRHKDRAAG). Positions 282–309 (LKQHISSRRHKDRAAGKPPKPKYSPYNK) are disordered.

Its subcellular location is the nucleus. The protein is Zinc finger protein 385D (ZNF385D) of Homo sapiens (Human).